The primary structure comprises 381 residues: cAMP-dependent protein kinase type I-alpha regulatory subunit (381 aa).

M1 carries the post-translational modification N-acetylmethionine. Residues 1–135 (MESGSTAASE…AALAKAIEKN (135 aa)) are dimerization and phosphorylation. At S3 the chain carries Phosphoserine. Residues 64-96 (QIQNLQKAGTRTDSREDEISPPPPNPVVKGRRR) are disordered. T75 is modified (phosphothreonine). S77 and S83 each carry phosphoserine. Positions 96–100 (RRGAI) match the Pseudophosphorylation motif motif. S101 is modified (phosphoserine). 3',5'-cyclic AMP is bound by residues 137-254 (LFSH…SKVS), E202, R211, 255-381 (ILES…SLSV), E326, and R335. S258 bears the Phosphoserine mark.

It belongs to the cAMP-dependent kinase regulatory chain family. The inactive holoenzyme is composed of two regulatory chains and two catalytic chains. Activation by cAMP releases the two active catalytic monomers and the regulatory dimer. Interacts with PRKACA and PRKACB. PRKAR1A also interacts with RFC2; the complex may be involved in cell survival. Interacts with AKAP4. Interacts with RARA; the interaction occurs in the presence of cAMP or FSH and regulates RARA transcriptional activity. Interacts with the phosphorylated form of PJA2. Interacts with CBFA2T3. Interacts with PRKX; regulates this cAMP-dependent protein kinase. Interacts with smAKAP; this interaction may target PRKAR1A to the plasma membrane. Interacts with AICDA. Post-translationally, the pseudophosphorylation site binds to the substrate-binding region of the catalytic chain, resulting in the inhibition of its activity.

The protein resides in the cell membrane. Its function is as follows. Regulatory subunit of the cAMP-dependent protein kinases involved in cAMP signaling in cells. The sequence is that of cAMP-dependent protein kinase type I-alpha regulatory subunit (PRKAR1A) from Pongo abelii (Sumatran orangutan).